Consider the following 404-residue polypeptide: Nicotinate phosphoribosyltransferase (404 aa).

His-225 carries the phosphohistidine; by autocatalysis modification.

The protein belongs to the NAPRTase family. Transiently phosphorylated on a His residue during the reaction cycle. Phosphorylation strongly increases the affinity for substrates and increases the rate of nicotinate D-ribonucleotide production. Dephosphorylation regenerates the low-affinity form of the enzyme, leading to product release.

It carries out the reaction nicotinate + 5-phospho-alpha-D-ribose 1-diphosphate + ATP + H2O = nicotinate beta-D-ribonucleotide + ADP + phosphate + diphosphate. It participates in cofactor biosynthesis; NAD(+) biosynthesis; nicotinate D-ribonucleotide from nicotinate: step 1/1. Catalyzes the synthesis of beta-nicotinate D-ribonucleotide from nicotinate and 5-phospho-D-ribose 1-phosphate at the expense of ATP. This is Nicotinate phosphoribosyltransferase from Methanosarcina acetivorans (strain ATCC 35395 / DSM 2834 / JCM 12185 / C2A).